A 448-amino-acid polypeptide reads, in one-letter code: Nuclear distribution protein PAC1 (448 aa).

The 33-residue stretch at 9–41 (QAEELHKSIIAYLAANNFQDSVTAMRTELNLGE) folds into the LisH domain. The tract at residues 74 to 95 (SATPTSLSNRKQDPASWLPAGP) is disordered. WD repeat units follow at residues 102 to 143 (SHRT…RTVK), 145 to 185 (HTKA…KNIR), 189 to 236 (GHDH…CLKT), 239 to 278 (GHSD…PETK), 283 to 343 (GHEH…IKTL), 345 to 384 (GHDN…KCVK), and 389 to 444 (MHEH…TSLR).

Belongs to the WD repeat LIS1/nudF family. In terms of assembly, self-associates. Interacts with NDL1 and dynein.

Its subcellular location is the cytoplasm. It is found in the cytoskeleton. The protein localises to the spindle pole. In terms of biological role, positively regulates the activity of the minus-end directed microtubule motor protein dynein. May enhance dynein-mediated microtubule sliding by targeting dynein to the microtubule plus end. Required for nuclear migration during vegetative growth as well as development. Required for retrograde early endosome (EE) transport from the hyphal tip. Required for localization of dynein to the mitotic spindle poles. Recruits additional proteins to the dynein complex at SPBs. This is Nuclear distribution protein PAC1 from Fusarium vanettenii (strain ATCC MYA-4622 / CBS 123669 / FGSC 9596 / NRRL 45880 / 77-13-4) (Fusarium solani subsp. pisi).